The primary structure comprises 115 residues: DNA-directed RNA polymerase subunit omega (115 aa).

It belongs to the RNA polymerase subunit omega family. In terms of assembly, the RNAP catalytic core consists of 2 alpha, 1 beta, 1 beta' and 1 omega subunit. When a sigma factor is associated with the core the holoenzyme is formed, which can initiate transcription.

It catalyses the reaction RNA(n) + a ribonucleoside 5'-triphosphate = RNA(n+1) + diphosphate. In terms of biological role, promotes RNA polymerase assembly. Latches the N- and C-terminal regions of the beta' subunit thereby facilitating its interaction with the beta and alpha subunits. This chain is DNA-directed RNA polymerase subunit omega, found in Cutibacterium acnes (strain DSM 16379 / KPA171202) (Propionibacterium acnes).